The primary structure comprises 90 residues: Putative regulatory protein NT01CX_2250 (90 aa).

It belongs to the RemA family.

This chain is Putative regulatory protein NT01CX_2250, found in Clostridium novyi (strain NT).